The following is a 504-amino-acid chain: Maturase K (504 aa).

Belongs to the intron maturase 2 family. MatK subfamily.

Its subcellular location is the plastid. The protein resides in the chloroplast. In terms of biological role, usually encoded in the trnK tRNA gene intron. Probably assists in splicing its own and other chloroplast group II introns. In Vigna unguiculata (Cowpea), this protein is Maturase K.